The following is a 1846-amino-acid chain: Unconventional myosin-Vb (1846 aa).

The 53-residue stretch at 8-60 folds into the Myosin N-terminal SH3-like domain; that stretch reads SRYTRVWIPDPDEVWRSAELTKDYKDGDESLQLRLEDDTILDYPIDVQNNQVP. The segment at 21–40 is requires for interaction with LIMA1; that stretch reads VWRSAELTKDYKDGDESLQL. The region spanning 69 to 763 is the Myosin motor domain; the sequence is VGENDLTALS…QVAYLEKLRA (695 aa). Residue 163–170 coordinates ATP; sequence GESGAGKT. The disordered stretch occupies residues 599 to 629; the sequence is VPATNTAKSRSSSKINVRSSRPLMKAPNKEH. A compositionally biased stretch (low complexity) spans 607 to 619; the sequence is SRSSSKINVRSSR. Residues 641 to 663 form an actin-binding region; sequence LNLLMETLNATTPHYVRCIKPND. 6 IQ domains span residues 767–788, 789–813, 814–837, 838–861, 862–884, and 885–914; these read REATIMIQKTVRGWLQRVKYRR, LRAATLTLQRFCRGYLARRLTEHLR, RTRAAIVFQKQYRMLKARRAYCRV, RRAAVIIQSYTRGHVCTQKLPPVL, TEHKATIIQKYARGWMARRHFQR, and QRDAAIVIQCAFRRLKARQALKALKIEARS. Coiled coils occupy residues 915–1272 and 1334–1450; these read AEHL…ADQR and LKQV…RHHE. Positions 1088 to 1122 are disordered; it reads RDEQQTPGHRKNPSNQSSLESDSNYPSISTSEIGD. Polar residues predominate over residues 1100–1120; sequence PSNQSSLESDSNYPSISTSEI. Phosphoserine is present on Ser1444. The Dilute domain occupies 1524–1801; sequence SSTINGIKKV…IRTIQAQLQE (278 aa).

It belongs to the TRAFAC class myosin-kinesin ATPase superfamily. Myosin family. Component of the CART complex, at least composed of ACTN4, HGS/HRS, MYO5B and TRIM3. Interacts with RAB11FIP2. Interacts with RAB11A and RAB8A. Found in a complex with CFTR and RAB11A. Interacts with NPC1L1. Interacts with LIMA1.

The protein localises to the cytoplasm. Functionally, may be involved in vesicular trafficking via its association with the CART complex. The CART complex is necessary for efficient transferrin receptor recycling but not for EGFR degradation. Required in a complex with RAB11A and RAB11FIP2 for the transport of NPC1L1 to the plasma membrane. Together with RAB11A participates in CFTR trafficking to the plasma membrane and TF (transferrin) recycling in nonpolarized cells. Together with RAB11A and RAB8A participates in epithelial cell polarization. Together with RAB25 regulates transcytosis. Required for proper localization of bile salt export pump ABCB11 at the apical/canalicular plasma membrane of hepatocytes. This chain is Unconventional myosin-Vb (Myo5b), found in Rattus norvegicus (Rat).